The primary structure comprises 115 residues: Large ribosomal subunit protein bL20 (115 aa).

This sequence belongs to the bacterial ribosomal protein bL20 family.

In terms of biological role, binds directly to 23S ribosomal RNA and is necessary for the in vitro assembly process of the 50S ribosomal subunit. It is not involved in the protein synthesizing functions of that subunit. This Prochlorococcus marinus (strain MIT 9301) protein is Large ribosomal subunit protein bL20.